The following is a 766-amino-acid chain: Serine/threonine-protein kinase tousled-like 1 (766 aa).

Residue Met1 is modified to N-acetylmethionine. The span at 1–19 (MSVQSSSGSLEGPPSWSQL) shows a compositional bias: polar residues. The interval 1 to 197 (MSVQSSSGSL…SPSPTALAFG (197 aa)) is disordered. The span at 20 to 33 (STSPTPGSAAAARS) shows a compositional bias: low complexity. Thr38 carries the post-translational modification Phosphothreonine. Basic and acidic residues predominate over residues 43-64 (RPREGAMDELHSLDPRRQELLE). Residues Ser54, Ser77, and Ser80 each carry the phosphoserine modification. Residues 68–85 (TGVASGSTGSTGSCSVGA) are compositionally biased toward low complexity. Residues 87 to 103 (ASTNNESSNHSFGSLGS) are compositionally biased toward polar residues. The segment covering 105–121 (SDKESETPEKKQSESSR) has biased composition (basic and acidic residues). 4 positions are modified to phosphoserine: Ser134, Ser159, Ser174, and Ser176. The segment covering 170-192 (SPQNSHSHSTPSSSVRPNSPSPT) has biased composition (low complexity). Positions 230–281 (QDLEKKEGRIDDLLRANCDLRRQIDEQQKLLEKYKERLNKCISMSKKLLIEK) form a coiled coil. The segment at 346 to 383 (LAKRKPPTANNSQAPSTNSEPKQRKNKAVNGAENDPFV) is disordered. Polar residues predominate over residues 353–365 (TANNSQAPSTNSE). Residues 397–445 (HEQEEIFKLRLGHLKKEEAEIQAELERLERVRNLHIRELKRINNEDNSQ) are a coiled coil. Residues 456–734 (YLLLHLLGRG…VHQLANDPYL (279 aa)) enclose the Protein kinase domain. Residues 462–470 (LGRGGFSEV) and Lys485 each bind ATP. Asp586 serves as the catalytic Proton acceptor. Ser743 carries the phosphoserine modification.

This sequence belongs to the protein kinase superfamily. Ser/Thr protein kinase family. In terms of assembly, heterodimer with TLK2. Mg(2+) serves as cofactor. Widely expressed. Present in fetal placenta, liver, kidney and pancreas but not heart or skeletal muscle. Also found in adult cell lines. Isoform 3 is ubiquitously expressed in all tissues examined.

The protein localises to the nucleus. The enzyme catalyses L-seryl-[protein] + ATP = O-phospho-L-seryl-[protein] + ADP + H(+). The catalysed reaction is L-threonyl-[protein] + ATP = O-phospho-L-threonyl-[protein] + ADP + H(+). Its activity is regulated as follows. Cell-cycle regulated, maximal activity in S-phase. Inactivated by phosphorylation at Ser-743, potentially by CHEK1. Functionally, rapidly and transiently inhibited by phosphorylation following the generation of DNA double-stranded breaks during S-phase. This is cell cycle checkpoint and ATM-pathway dependent and appears to regulate processes involved in chromatin assembly. Isoform 3 phosphorylates and enhances the stability of the t-SNARE SNAP23, augmenting its assembly with syntaxin. Isoform 3 protects the cells from the ionizing radiation by facilitating the repair of DSBs. In vitro, phosphorylates histone H3 at 'Ser-10'. The chain is Serine/threonine-protein kinase tousled-like 1 (TLK1) from Homo sapiens (Human).